The sequence spans 209 residues: Uracil phosphoribosyltransferase (209 aa).

5-phospho-alpha-D-ribose 1-diphosphate contacts are provided by residues R79, R104, and 131-139 (DPMLATGNS). Uracil contacts are provided by residues I194 and 199 to 201 (GDA). D200 is a 5-phospho-alpha-D-ribose 1-diphosphate binding site.

Belongs to the UPRTase family. It depends on Mg(2+) as a cofactor.

It catalyses the reaction UMP + diphosphate = 5-phospho-alpha-D-ribose 1-diphosphate + uracil. The protein operates within pyrimidine metabolism; UMP biosynthesis via salvage pathway; UMP from uracil: step 1/1. Allosterically activated by GTP. In terms of biological role, catalyzes the conversion of uracil and 5-phospho-alpha-D-ribose 1-diphosphate (PRPP) to UMP and diphosphate. In Agrobacterium fabrum (strain C58 / ATCC 33970) (Agrobacterium tumefaciens (strain C58)), this protein is Uracil phosphoribosyltransferase.